A 319-amino-acid polypeptide reads, in one-letter code: Acetyl-coenzyme A carboxylase carboxyl transferase subunit alpha (319 aa).

A CoA carboxyltransferase C-terminal domain is found at 35-296; that stretch reads NIDEEVHRLR…KAQLLEDLAD (262 aa).

The protein belongs to the AccA family. In terms of assembly, acetyl-CoA carboxylase is a heterohexamer composed of biotin carboxyl carrier protein (AccB), biotin carboxylase (AccC) and two subunits each of ACCase subunit alpha (AccA) and ACCase subunit beta (AccD).

The protein localises to the cytoplasm. It catalyses the reaction N(6)-carboxybiotinyl-L-lysyl-[protein] + acetyl-CoA = N(6)-biotinyl-L-lysyl-[protein] + malonyl-CoA. It functions in the pathway lipid metabolism; malonyl-CoA biosynthesis; malonyl-CoA from acetyl-CoA: step 1/1. Component of the acetyl coenzyme A carboxylase (ACC) complex. First, biotin carboxylase catalyzes the carboxylation of biotin on its carrier protein (BCCP) and then the CO(2) group is transferred by the carboxyltransferase to acetyl-CoA to form malonyl-CoA. This Salmonella arizonae (strain ATCC BAA-731 / CDC346-86 / RSK2980) protein is Acetyl-coenzyme A carboxylase carboxyl transferase subunit alpha.